Consider the following 716-residue polypeptide: Probable basic-leucine zipper transcription factor O (716 aa).

Residues 20–142 (LLDDFSQLQQ…YQQRQQQYQD (123 aa)) are a coiled coil. The interval 173 to 233 (SINYNMNNNN…NNKTTDNINN (61 aa)) is disordered. Residues 381–444 (KSTESIKKMN…SVDLMKPSND (64 aa)) enclose the bZIP domain. Residues 387 to 403 (KKMNQNKASRNYRQKKK) are basic motif. Residues 406–413 (IKEIEDKL) are leucine-zipper.

Belongs to the bZIP family.

Its subcellular location is the nucleus. Probable transcriptional regulator. The chain is Probable basic-leucine zipper transcription factor O (bzpO) from Dictyostelium discoideum (Social amoeba).